Here is a 93-residue protein sequence, read N- to C-terminus: Allatostatin C (93 aa).

The N-terminal stretch at Met-1–Ala-23 is a signal peptide. A propeptide spanning residues Met-24–Val-61 is cleaved from the precursor. Cys-83 and Cys-90 form a disulfide bridge.

Its subcellular location is the secreted. Functionally, inhibits juvenile hormone biosynthesis. In Camponotus floridanus (Florida carpenter ant), this protein is Allatostatin C.